A 612-amino-acid chain; its full sequence is Peroxisomal carnitine O-octanoyltransferase (612 aa).

The residue at position 1 (methionine 1) is an N-acetylmethionine. N6-succinyllysine occurs at positions 40 and 57. Histidine 327 functions as the Proton acceptor in the catalytic mechanism. Residues lysine 406 and lysine 410 to aspartate 417 each bind CoA. N6-acetyllysine; alternate is present on lysine 406. Lysine 406 carries the post-translational modification N6-succinyllysine; alternate. (R)-carnitine is bound by residues tyrosine 439, threonine 441, and threonine 452. The Microbody targeting signal motif lies at proline 610–leucine 612.

Belongs to the carnitine/choline acetyltransferase family. Monomer.

It localises to the peroxisome. It carries out the reaction octanoyl-CoA + (R)-carnitine = O-octanoyl-(R)-carnitine + CoA. The catalysed reaction is 4,8-dimethylnonanoyl-CoA + (R)-carnitine = O-4,8-dimethylnonanoyl-(R)-carnitine + CoA. It functions in the pathway lipid metabolism; fatty acid beta-oxidation. Its function is as follows. Beta-oxidation of fatty acids. The highest activity concerns the C6 to C10 chain length substrate. In Bos taurus (Bovine), this protein is Peroxisomal carnitine O-octanoyltransferase (CROT).